The chain runs to 216 residues: MRIILLGAPGAGKGTQAQFIMKKYGIVQISTGDMLRAAVKAGTKLGQQVQGIMAAGKLVTDDLVIALVKERIRQEDCKEGFLLDGFPRTIPQADAMAEADIKIDYVLELVVPDEFIVERISGRRVHMPSGRIYHLKFNPPKITDKDDMTGESLTLRKDDQETTVRERLLEYHQQTMALVDYYRQRAKRGDTKYFKLDGTRTVNEVSQQLSSILGES.

ATP is bound at residue 10-15; the sequence is GAGKGT. Residues 30-59 form an NMP region; that stretch reads STGDMLRAAVKAGTKLGQQVQGIMAAGKLV. AMP is bound by residues threonine 31, arginine 36, 57-59, 85-88, and glutamine 92; these read KLV and GFPR. The interval 122–159 is LID; the sequence is GRRVHMPSGRIYHLKFNPPKITDKDDMTGESLTLRKDD. ATP contacts are provided by residues arginine 123 and 132 to 133; that span reads IY. AMP-binding residues include arginine 156 and arginine 167. Arginine 200 contributes to the ATP binding site.

Belongs to the adenylate kinase family. Monomer.

It localises to the cytoplasm. It catalyses the reaction AMP + ATP = 2 ADP. The protein operates within purine metabolism; AMP biosynthesis via salvage pathway; AMP from ADP: step 1/1. Its function is as follows. Catalyzes the reversible transfer of the terminal phosphate group between ATP and AMP. Plays an important role in cellular energy homeostasis and in adenine nucleotide metabolism. The protein is Adenylate kinase of Hamiltonella defensa subsp. Acyrthosiphon pisum (strain 5AT).